The sequence spans 163 residues: MEFHLDATFFAFVGLVLFLALVVYLKVPGMMARSLDDRADQIRNELAEAKRLREEAQHLLAEYQRKRKEAEAEAAHIVAAAEREAEMLTADAKKKTEEFVANRTALSEQKILQAEAEAMKAVRSAAVDLAIAAAETVLAKQADAKVQSELFGNAVSQVKTRLN.

Residues 5 to 25 (LDATFFAFVGLVLFLALVVYL) traverse the membrane as a helical segment.

Belongs to the ATPase B chain family. F-type ATPases have 2 components, F(1) - the catalytic core - and F(0) - the membrane proton channel. F(1) has five subunits: alpha(3), beta(3), gamma(1), delta(1), epsilon(1). F(0) has three main subunits: a(1), b(2) and c(10-14). The alpha and beta chains form an alternating ring which encloses part of the gamma chain. F(1) is attached to F(0) by a central stalk formed by the gamma and epsilon chains, while a peripheral stalk is formed by the delta and b chains.

Its subcellular location is the cell inner membrane. In terms of biological role, f(1)F(0) ATP synthase produces ATP from ADP in the presence of a proton or sodium gradient. F-type ATPases consist of two structural domains, F(1) containing the extramembraneous catalytic core and F(0) containing the membrane proton channel, linked together by a central stalk and a peripheral stalk. During catalysis, ATP synthesis in the catalytic domain of F(1) is coupled via a rotary mechanism of the central stalk subunits to proton translocation. Functionally, component of the F(0) channel, it forms part of the peripheral stalk, linking F(1) to F(0). The polypeptide is ATP synthase subunit b 1 (Rhizobium etli (strain CIAT 652)).